Here is a 475-residue protein sequence, read N- to C-terminus: MVQGTTSDAGKSVLVAGLCRVLARKGIKVAPFKPQNMALNSAVTKDGGEIGRAQAVQAQACNVEPTVHMNPVLIKPNSDTGAQIILQGKALSNMDAVGFHDYKRVAMGTVLDSFAKLTDEYESVMIEGAGSPAEINLRENDIANMGFAEEADVPVIIIADIDRGGVFAHLYGTLALLSESEQARVKGFVINRFRGDIGLLESGLDWLEEKTGKPVLGVLPFLHGLNLEAEDAITAEQELSSQVKLNVVVPVLTRISNHTDFDVLRLNPDINLRYVGKGEKIDKADLVILPGTKSVRDDLDYLRSQGWDKDIQRHIRLGGKVIGICGGYQMLGKLIDDPNGVEGSPGKSEGLGLLDITTTLTDSKQLTNTHAQLCLNGKTANVKGYEIHVGRSEVQGAQPLRLSSGEAEGAISECGQIMGTYLHGFFDEADVLSLVSEWVNGTQIKQQDFEQLKEKGINRIADAIAQHMNLDFLFK.

The GATase cobBQ-type domain occupies 244 to 431; that stretch reads KLNVVVPVLT…LHGFFDEADV (188 aa). Catalysis depends on C325, which acts as the Nucleophile. H423 is an active-site residue.

The protein belongs to the CobB/CobQ family. CobQ subfamily.

The protein operates within cofactor biosynthesis; adenosylcobalamin biosynthesis. In terms of biological role, catalyzes amidations at positions B, D, E, and G on adenosylcobyrinic A,C-diamide. NH(2) groups are provided by glutamine, and one molecule of ATP is hydrogenolyzed for each amidation. The chain is Cobyric acid synthase from Vibrio campbellii (strain ATCC BAA-1116).